A 500-amino-acid chain; its full sequence is MTDIENKNYIIALDQGTTSSRAIIFDRDANVVCTAQREFAQHYPQAGWVEHDPMEIFATQSAVMVEALAQAGLHHDQVAAIGITNQRETTVVWDKTTGRPVYNAIVWQCRRSTEICQQLKRDGHEDYIRDTTGLVTDPYFSGTKLKWILDNVEGSRERARNGELLFGTVDSWLIWKFTGGKVHVTDYTNASRTMLFNIHTLEWDAKMLEILDIPREMLPEVKASSEIYGRTKSGIAIGGIAGDQQAALFGQMCVEPGQAKNTYGTGCFLLMNTGDKAVKSQHGMLTTIACGPRGEVAYALEGAVFNGGSTVQWLRDELKIVNDAHDTEYFANKVKDSNGVYLVPAFTGLGAPYWDPYARGALFGLTRGVRVDHIIRAALESIAYQTRDVLDAMQQDSGERLKALRVDGGAVANNFLMQFQADILGTQVERPKMRETTALGAAYLAGLACGFWGSLEELRGKAVIEREFEPSLDEVEKEKLYKGWKKAVSRTRDWAREDAE.

Thr-17 provides a ligand contact to ADP. ATP is bound by residues Thr-17, Thr-18, and Ser-19. Thr-17 lines the sn-glycerol 3-phosphate pocket. Arg-21 contributes to the ADP binding site. The sn-glycerol 3-phosphate site is built by Arg-87, Glu-88, Tyr-139, and Asp-243. Arg-87, Glu-88, Tyr-139, Asp-243, and Gln-244 together coordinate glycerol. Positions 265 and 308 each coordinate ADP. ATP-binding residues include Thr-265, Gly-308, Gln-312, and Gly-409. The ADP site is built by Gly-409 and Asn-413.

Belongs to the FGGY kinase family.

It carries out the reaction glycerol + ATP = sn-glycerol 3-phosphate + ADP + H(+). The protein operates within polyol metabolism; glycerol degradation via glycerol kinase pathway; sn-glycerol 3-phosphate from glycerol: step 1/1. Inhibited by fructose 1,6-bisphosphate (FBP). Key enzyme in the regulation of glycerol uptake and metabolism. Catalyzes the phosphorylation of glycerol to yield sn-glycerol 3-phosphate. In Pseudomonas fluorescens (strain Pf0-1), this protein is Glycerol kinase.